We begin with the raw amino-acid sequence, 753 residues long: 5-methyltetrahydropteroyltriglutamate--homocysteine methyltransferase (753 aa).

5-methyltetrahydropteroyltri-L-glutamate is bound by residues 17–20 (RELK) and Lys-117. L-homocysteine-binding positions include 431-433 (IGS) and Glu-484. Residues 431 to 433 (IGS) and Glu-484 each bind L-methionine. Residues 515–516 (RC) and Trp-561 contribute to the 5-methyltetrahydropteroyltri-L-glutamate site. Residue Asp-599 coordinates L-homocysteine. Residue Asp-599 participates in L-methionine binding. Glu-605 contacts 5-methyltetrahydropteroyltri-L-glutamate. Zn(2+)-binding residues include His-641, Cys-643, and Glu-665. The Proton donor role is filled by His-694. Cys-726 provides a ligand contact to Zn(2+).

It belongs to the vitamin-B12 independent methionine synthase family. Requires Zn(2+) as cofactor.

The enzyme catalyses 5-methyltetrahydropteroyltri-L-glutamate + L-homocysteine = tetrahydropteroyltri-L-glutamate + L-methionine. The protein operates within amino-acid biosynthesis; L-methionine biosynthesis via de novo pathway; L-methionine from L-homocysteine (MetE route): step 1/1. Its function is as follows. Catalyzes the transfer of a methyl group from 5-methyltetrahydrofolate to homocysteine resulting in methionine formation. This Escherichia coli O157:H7 protein is 5-methyltetrahydropteroyltriglutamate--homocysteine methyltransferase.